We begin with the raw amino-acid sequence, 343 residues long: Heat-inducible transcription repressor HrcA (343 aa).

It belongs to the HrcA family.

Functionally, negative regulator of class I heat shock genes (grpE-dnaK-dnaJ and groELS operons). Prevents heat-shock induction of these operons. The polypeptide is Heat-inducible transcription repressor HrcA (Lysinibacillus sphaericus (Bacillus sphaericus)).